The sequence spans 222 residues: Ribosomal RNA small subunit methyltransferase G (222 aa).

Residues Gly80, Leu85, 131–132 (VE), and Arg148 each bind S-adenosyl-L-methionine.

Belongs to the methyltransferase superfamily. RNA methyltransferase RsmG family.

The protein localises to the cytoplasm. The catalysed reaction is guanosine(527) in 16S rRNA + S-adenosyl-L-methionine = N(7)-methylguanosine(527) in 16S rRNA + S-adenosyl-L-homocysteine. Specifically methylates the N7 position of guanine in position 527 of 16S rRNA. In Polynucleobacter asymbioticus (strain DSM 18221 / CIP 109841 / QLW-P1DMWA-1) (Polynucleobacter necessarius subsp. asymbioticus), this protein is Ribosomal RNA small subunit methyltransferase G.